We begin with the raw amino-acid sequence, 105 residues long: Anti-sigma factor RsrA (105 aa).

Residues cysteine 11, histidine 37, cysteine 41, and cysteine 44 each coordinate Zn(2+). A disulfide bridge links cysteine 11 with cysteine 44. Positions 33-47 (KFEHHFEECSPCLEK) are contributes to redox-sensitivity. The disordered stretch occupies residues 86–105 (QSVPEHDVAAAPSSSAPQES). Low complexity predominate over residues 94-105 (AAAPSSSAPQES).

It belongs to the zinc-associated anti-sigma factor (ZAS) superfamily. Interacts with cognate sigma factor SigR under reducing but not oxiding conditions. Treatment with the thiol-oxidzing agent diamide inhibits the interaction, while incubation with thioredoxin (trxA) stimulates the interaction. Requires Zn(2+) as cofactor. Under oxidizing conditions up to 3 disulfide bonds are formed. A single disulfide bond inhibits binding to SigR. Cys-11 forms a disulfide bond with either Cys-44 (the major bind) or Cys-41 (a minor bond).

Functionally, a redox-regulated anti-sigma factor for extracytoplasmic function (ECF) sigma factor SigR, and a key sensor of disulfide stress. Holds SigR, its cognate ECF sigma factor, in an inactive form, inhibiting its sigma activity under reducing but not oxidizing conditions; oxidation and reduction of the anti-sigma factor is reversible. Mycothiol (MSH) is competent for reduction of RsrA, allowing it to bind to SigR. In conjunction with its cognate sigma factor SigR may sense the intracellular level of reduced MSH. Probably releases SigR during oxidative stress. This Streptomyces coelicolor (strain ATCC BAA-471 / A3(2) / M145) protein is Anti-sigma factor RsrA (rsrA).